The primary structure comprises 382 residues: Pyrimidine monooxygenase RutA (382 aa).

Residues isoleucine 68–lysine 69, asparagine 134, glutamate 143, arginine 159–tyrosine 160, and serine 209 contribute to the FMN site.

This sequence belongs to the NtaA/SnaA/DszA monooxygenase family. RutA subfamily.

The catalysed reaction is uracil + FMNH2 + NADH + O2 = (Z)-3-ureidoacrylate + FMN + NAD(+) + H2O + H(+). It catalyses the reaction thymine + FMNH2 + NADH + O2 = (Z)-2-methylureidoacrylate + FMN + NAD(+) + H2O + H(+). Functionally, catalyzes the pyrimidine ring opening between N-3 and C-4 by an unusual flavin hydroperoxide-catalyzed mechanism, adding oxygen atoms in the process to yield ureidoacrylate peracid, that immediately reacts with FMN forming ureidoacrylate and FMN-N(5)-oxide. The FMN-N(5)-oxide reacts spontaneously with NADH to produce FMN. Requires the flavin reductase RutF to regenerate FMN in vivo. This chain is Pyrimidine monooxygenase RutA, found in Shigella flexneri serotype X (strain 2002017).